Reading from the N-terminus, the 146-residue chain is Hemoglobin cathodic subunit beta (146 aa).

A Globin domain is found at 2-146; it reads EWSSSERSTI…LIHALSRQYF (145 aa). Heme b-binding residues include H63 and H92.

Belongs to the globin family. In terms of assembly, heterotetramer of two alpha chains and two beta chains. As to expression, red blood cells.

Functionally, involved in oxygen transport from gills to the various peripheral tissues. This is Hemoglobin cathodic subunit beta from Gymnothorax unicolor (Brown moray).